The chain runs to 98 residues: NADH-ubiquinone oxidoreductase chain 4L (98 aa).

The next 3 helical transmembrane spans lie at 1–21 (MTLIHMNILMAFSMSLVGLLM), 29–49 (ALLCLEGMMLSLFVLATLTIL), and 61–81 (IILLVFAACEAAIGLALLVMV).

The protein belongs to the complex I subunit 4L family. As to quaternary structure, core subunit of respiratory chain NADH dehydrogenase (Complex I) which is composed of 45 different subunits.

It localises to the mitochondrion inner membrane. It catalyses the reaction a ubiquinone + NADH + 5 H(+)(in) = a ubiquinol + NAD(+) + 4 H(+)(out). Its function is as follows. Core subunit of the mitochondrial membrane respiratory chain NADH dehydrogenase (Complex I) which catalyzes electron transfer from NADH through the respiratory chain, using ubiquinone as an electron acceptor. Part of the enzyme membrane arm which is embedded in the lipid bilayer and involved in proton translocation. This chain is NADH-ubiquinone oxidoreductase chain 4L (MT-ND4L), found in Megaptera novaeangliae (Humpback whale).